The following is a 798-amino-acid chain: Probable G-protein coupled receptor 156 (798 aa).

The Extracellular segment spans residues 1 to 49 (MEPEINCSEFCDSFPGQELDRRPLHDLCKTTITESQHSSTAASPLSPAL). Asn6 carries an N-linked (GlcNAc...) asparagine glycan. Residues 50 to 70 (LGIMWTFLSCGLLLVLFFLAF) traverse the membrane as a helical segment. Topologically, residues 71–86 (TIRCRKNRIVKMSSPN) are cytoplasmic. Residues 87–107 (LNVVTLLGSCLTYISAYLFGI) form a helical membrane-spanning segment. Over 108–118 (QDALEGSSVEA) the chain is Extracellular. Residues 119–139 (LIQTRLSLLCIGTSLVFGPIL) traverse the membrane as a helical segment. Residues 140 to 164 (GKSWRLYKVFTQRVPDKRVIIKDLQ) are Cytoplasmic-facing. A helical transmembrane segment spans residues 165-185 (LLGLVAALVVADVILLVTWVL). Topologically, residues 186 to 222 (TDPIQCLQMLGVSMKVTGRDVSCSLTNTHFCASRYSD) are extracellular. The helical transmembrane segment at 223–243 (VWIALVLGCKGLLLLYGAYLA) threads the bilayer. Residues 244 to 257 (GLTNHVSSPPVNQS) are Cytoplasmic-facing. Residues 258-278 (LTIMVGVNLLLLTAGLLFVVT) form a helical membrane-spanning segment. The Extracellular portion of the chain corresponds to 279-288 (RYLHSWPNLV). Residues 289-309 (FGLTSGGIFVCTTTVNCCVFI) traverse the membrane as a helical segment. The Cytoplasmic segment spans residues 310–798 (PQLKQWKAFE…FKDDLKPTLV (489 aa)). A coiled-coil region spans residues 353–390 (DEKSCMERLLTEKNAVIESLQEQVSNAKEKLVKLMSAE). 3 disordered regions span residues 441 to 497 (HVQG…PMAP), 546 to 666 (SEAP…KQCE), and 693 to 715 (PAAP…PRLS). The segment covering 479-492 (PKAEQSEGPERGDQ) has biased composition (basic and acidic residues). The span at 559 to 572 (LWKSTTSRSPQKLS) shows a compositional bias: polar residues. The span at 583–594 (VRRRRAAQRARS) shows a compositional bias: basic residues. Polar residues predominate over residues 606-624 (HQANSTVSSSQSGLIVQNR). Residues 639-648 (PRSSSVKPSP) show a composition bias toward low complexity.

This sequence belongs to the G-protein coupled receptor 3 family. GABA-B receptor subfamily. As to expression, expressed in the outer and inner hair cells of the organ of Corti (at protein level). Expressed in the utricle and saccule within the vestibule (at protein level).

It localises to the cell membrane. Its subcellular location is the postsynaptic cell membrane. Functionally, orphan G-protein coupled receptor involved in the regulation of hair cell orientation in mechanosensory organs of the inner ear. It is required to trigger a 180 degree reversal in hair cell orientation, creating a virtual line of polarity reversal (LPR) across which stereociliary bundles are arranged in opposite orientations. In Mus musculus (Mouse), this protein is Probable G-protein coupled receptor 156 (Gpr156).